A 184-amino-acid chain; its full sequence is CASP-like protein 1U2 (184 aa).

Residues 1–16 (MSYGCQVSDDEPNGSK) are Cytoplasmic-facing. Residues 17-37 (AVSLLLRLSTLALALTSAVVM) form a helical membrane-spanning segment. Residues 38–62 (ATASECTVVQLNGVVATITYKDFPP) lie on the Extracellular side of the membrane. Residues 63 to 83 (FVYLVGFNIAAAMLEAAAIYL) form a helical membrane-spanning segment. At 84-100 (RLSTGGGDDDDEGFKGK) the chain is on the cytoplasmic side. A helical transmembrane segment spans residues 101-121 (LPGILLVVIDVAVQALVYTAT). At 122–153 (GGAFAAVSAYGPQINACGAGAGRFCGQVHQSK) the chain is on the extracellular side. Residues 154-174 (LLSFAGSAAVGLAVVFRDVSL) traverse the membrane as a helical segment. Residues 175-184 (PFSLWPTSSD) lie on the Cytoplasmic side of the membrane.

Belongs to the Casparian strip membrane proteins (CASP) family. In terms of assembly, homodimer and heterodimers.

It localises to the cell membrane. The polypeptide is CASP-like protein 1U2 (Oryza sativa subsp. japonica (Rice)).